Consider the following 416-residue polypeptide: MMLRGGCQRVGARLRGLRRGPRGPADGARRGVVSCIDPSMGLSEEQKEFQKVAFNFAAREMAPHMAEWDQKELFPVDTMRKAAQLGFGGVYVQTDVGGAGLSRLDTSIIFEALATGCTSTTAYMSIHNMCVWIIDRFGSEEQRHRLCPPLCTMEKFASYCLTEPGSGSDAASLMTSAVRQHDHYILNGSKAFISGGGEADIYVVMCRTGGPGPRGISCVVVEKGTPGLSFGKKEKKVGWNSQPTQAVIFEDCAVPVANRIGDEGQGFLIAMKGLNGGRINVASCSLGAAHASIVLARDYLKVRKQFGEPLANSQYLQFQLADMAARLVASRLMIRTAATALQEEREDAIVLCSMAKLFATDECFAICNQALQMHGGYGYLKDYAVQQYVRDSRVHQILEGSNEVMRMLISRSLLQE.

The N-terminal 23 residues, 1–23, are a transit peptide targeting the mitochondrion; that stretch reads MMLRGGCQRVGARLRGLRRGPRG. Residue K51 is modified to N6-acetyllysine; alternate. An N6-succinyllysine; alternate modification is found at K51. FAD-binding positions include 159-168 and 192-194; these read YCLTEPGSGS and FIS. A substrate-binding site is contributed by S168. K232 carries the N6-acetyllysine modification. K272 bears the N6-succinyllysine mark. Substrate is bound at residue 275-278; the sequence is NGGR. Residues R303, 313-314, and 372-376 contribute to the FAD site; these read SQ and QMHGG. The active-site Proton acceptor is the E399. 401–403 serves as a coordination point for FAD; it reads SNE. R411 contacts substrate.

It belongs to the acyl-CoA dehydrogenase family. In terms of assembly, homotetramer, formed by a dimer of dimers. FAD is required as a cofactor.

It is found in the mitochondrion. The catalysed reaction is 2-methylpropanoyl-CoA + oxidized [electron-transfer flavoprotein] + H(+) = 2-methylpropenoyl-CoA + reduced [electron-transfer flavoprotein]. The enzyme catalyses (2S)-2-methylbutanoyl-CoA + oxidized [electron-transfer flavoprotein] + H(+) = (2E)-2-methylbut-2-enoyl-CoA + reduced [electron-transfer flavoprotein]. It carries out the reaction propanoyl-CoA + oxidized [electron-transfer flavoprotein] + H(+) = acryloyl-CoA + reduced [electron-transfer flavoprotein]. It participates in amino-acid degradation; L-valine degradation. Functionally, isobutyryl-CoA dehydrogenase which catalyzes the conversion of 2-methylpropanoyl-CoA to (2E)-2-methylpropenoyl-CoA in the valine catabolic pathway. To a lesser extent, also able to catalyze the oxidation of (2S)-2-methylbutanoyl-CoA. The polypeptide is Isobutyryl-CoA dehydrogenase, mitochondrial (ACAD8) (Bos taurus (Bovine)).